A 322-amino-acid polypeptide reads, in one-letter code: Homoserine kinase (322 aa).

ATP is bound at residue 107-117 (PLSSGMGGSAA).

The protein belongs to the GHMP kinase family. Homoserine kinase subfamily.

The protein resides in the cytoplasm. It catalyses the reaction L-homoserine + ATP = O-phospho-L-homoserine + ADP + H(+). The protein operates within amino-acid biosynthesis; L-threonine biosynthesis; L-threonine from L-aspartate: step 4/5. Functionally, catalyzes the ATP-dependent phosphorylation of L-homoserine to L-homoserine phosphate. The polypeptide is Homoserine kinase (Xylella fastidiosa (strain 9a5c)).